The sequence spans 92 residues: Small ribosomal subunit protein uS19 (92 aa).

Belongs to the universal ribosomal protein uS19 family.

In terms of biological role, protein S19 forms a complex with S13 that binds strongly to the 16S ribosomal RNA. The polypeptide is Small ribosomal subunit protein uS19 (Xanthobacter autotrophicus (strain ATCC BAA-1158 / Py2)).